Here is a 156-residue protein sequence, read N- to C-terminus: Small ribosomal subunit protein uS7 (156 aa).

It belongs to the universal ribosomal protein uS7 family. Part of the 30S ribosomal subunit. Contacts proteins S9 and S11.

Functionally, one of the primary rRNA binding proteins, it binds directly to 16S rRNA where it nucleates assembly of the head domain of the 30S subunit. Is located at the subunit interface close to the decoding center, probably blocks exit of the E-site tRNA. In Pseudomonas syringae pv. tomato (strain ATCC BAA-871 / DC3000), this protein is Small ribosomal subunit protein uS7.